A 229-amino-acid chain; its full sequence is UPF0228 protein MA_3119 (229 aa).

Over residues 35 to 66 the composition is skewed to low complexity; it reads STPVNTSTPVNTSTPVNTSTPVNTSTPVSTST. The tract at residues 35–67 is disordered; that stretch reads STPVNTSTPVNTSTPVNTSTPVNTSTPVSTSTI.

This sequence belongs to the UPF0228 family.

This Methanosarcina acetivorans (strain ATCC 35395 / DSM 2834 / JCM 12185 / C2A) protein is UPF0228 protein MA_3119.